Consider the following 250-residue polypeptide: Manganese transport system ATP-binding protein MntB (250 aa).

The 233-residue stretch at 4–236 (VELDNVTVAY…NLQKTYGGRL (233 aa)) folds into the ABC transporter domain. An ATP-binding site is contributed by 36–43 (GPNGAGKS).

Belongs to the ABC transporter superfamily. In terms of assembly, the complex is probably composed of two ATP-binding proteins (MntB), two transmembrane proteins (MntC and MntD) and a solute-binding protein (MntA).

It localises to the cell membrane. In terms of biological role, probably part of the ABC transporter complex MntABCD involved in manganese import. Probably responsible for energy coupling to the transport system. The sequence is that of Manganese transport system ATP-binding protein MntB from Bacillus subtilis (strain 168).